The primary structure comprises 442 residues: D-inositol 3-phosphate glycosyltransferase (442 aa).

Histidine 26 contributes to the 1D-myo-inositol 3-phosphate binding site. UDP-N-acetyl-alpha-D-glucosamine is bound by residues 32-33 and glycine 40; that span reads QP. 1D-myo-inositol 3-phosphate contacts are provided by residues 37-42, lysine 95, tyrosine 128, threonine 152, and arginine 172; that span reads DAGGMN. UDP-N-acetyl-alpha-D-glucosamine is bound by residues arginine 246, lysine 251, and glutamine 304. Tyrosine 313, arginine 314, and alanine 316 together coordinate Mg(2+). UDP-N-acetyl-alpha-D-glucosamine-binding residues include glutamate 326 and glutamate 334. Threonine 340 lines the Mg(2+) pocket.

This sequence belongs to the glycosyltransferase group 1 family. MshA subfamily. Homodimer.

It catalyses the reaction 1D-myo-inositol 3-phosphate + UDP-N-acetyl-alpha-D-glucosamine = 1D-myo-inositol 2-acetamido-2-deoxy-alpha-D-glucopyranoside 3-phosphate + UDP + H(+). Functionally, catalyzes the transfer of a N-acetyl-glucosamine moiety to 1D-myo-inositol 3-phosphate to produce 1D-myo-inositol 2-acetamido-2-deoxy-glucopyranoside 3-phosphate in the mycothiol biosynthesis pathway. The chain is D-inositol 3-phosphate glycosyltransferase from Mycolicibacterium gilvum (strain PYR-GCK) (Mycobacterium gilvum (strain PYR-GCK)).